A 489-amino-acid polypeptide reads, in one-letter code: Rhamnulokinase (489 aa).

Residue 13–17 (ASSGR) participates in ATP binding. Cysteines 68 and 222 form a disulfide. Substrate contacts are provided by residues G83 and 236-238 (HDT). The active-site Proton acceptor is D237. Position 259 (T259) interacts with ATP. N296 provides a ligand contact to substrate. Q304 lines the ATP pocket. C353 and C370 are joined by a disulfide. G402 is a binding site for ATP. C413 and C417 are joined by a disulfide.

The protein belongs to the rhamnulokinase family. As to quaternary structure, monomer. Mg(2+) serves as cofactor.

It carries out the reaction L-rhamnulose + ATP = L-rhamnulose 1-phosphate + ADP + H(+). It functions in the pathway carbohydrate degradation; L-rhamnose degradation; glycerone phosphate from L-rhamnose: step 2/3. In terms of biological role, involved in the catabolism of L-rhamnose (6-deoxy-L-mannose). Catalyzes the transfer of the gamma-phosphate group from ATP to the 1-hydroxyl group of L-rhamnulose to yield L-rhamnulose 1-phosphate. This chain is Rhamnulokinase, found in Escherichia fergusonii (strain ATCC 35469 / DSM 13698 / CCUG 18766 / IAM 14443 / JCM 21226 / LMG 7866 / NBRC 102419 / NCTC 12128 / CDC 0568-73).